The sequence spans 151 residues: MLP-like protein 168 (151 aa).

Belongs to the MLP family.

This Arabidopsis thaliana (Mouse-ear cress) protein is MLP-like protein 168 (MLP168).